The primary structure comprises 22 residues: Chitin-binding protein 3 (22 aa).

In terms of processing, glycosylated; contains 2.5% carbohydrates.

Chitin-binding protein. Has antifungal activity against F.solani, F.oxysporum, C.musae and C.gloesporoides but not against P.oligandrum. Depending on concentration the antifungal activity can be fungistatic or fungicidal. Inhibits both spore germination and mycelial growth in F.solani at a concentration of 0.1 mg/ml. Has antifungal activity against C.krusei, C.albicans, C.tropicalis and C.parapsilosis. Has no chitinase, beta-glucanase or hemagglutinating activity. Acts as a flocculent. The protein is Chitin-binding protein 3 of Moringa oleifera (Horseradish tree).